Reading from the N-terminus, the 393-residue chain is Short-chain dehydrogenase/reductase family 42E member 1 (393 aa).

The Proton acceptor role is filled by Tyr152. NAD(+) is bound at residue Lys156. 2 helical membrane-spanning segments follow: residues 282-302 (LPLTLVYCFAFLTEMVHFILG) and 371-391 (GLLVFLLIIAVLIWLPSSVIL).

It belongs to the 3-beta-HSD family.

The protein localises to the membrane. The polypeptide is Short-chain dehydrogenase/reductase family 42E member 1 (SDR42E1) (Macaca fascicularis (Crab-eating macaque)).